Reading from the N-terminus, the 160-residue chain is 6,7-dimethyl-8-ribityllumazine synthase (160 aa).

Residues Trp27, 59-61 (AIE), and 81-83 (VVI) each bind 5-amino-6-(D-ribitylamino)uracil. 86 to 87 (QT) serves as a coordination point for (2S)-2-hydroxy-3-oxobutyl phosphate. Catalysis depends on His89, which acts as the Proton donor. Asn114 serves as a coordination point for 5-amino-6-(D-ribitylamino)uracil. Arg128 contributes to the (2S)-2-hydroxy-3-oxobutyl phosphate binding site.

It belongs to the DMRL synthase family. In terms of assembly, homopentamer.

It catalyses the reaction (2S)-2-hydroxy-3-oxobutyl phosphate + 5-amino-6-(D-ribitylamino)uracil = 6,7-dimethyl-8-(1-D-ribityl)lumazine + phosphate + 2 H2O + H(+). It participates in cofactor biosynthesis; riboflavin biosynthesis; riboflavin from 2-hydroxy-3-oxobutyl phosphate and 5-amino-6-(D-ribitylamino)uracil: step 1/2. Its function is as follows. Catalyzes the formation of 6,7-dimethyl-8-ribityllumazine by condensation of 5-amino-6-(D-ribitylamino)uracil with 3,4-dihydroxy-2-butanone 4-phosphate. This is the penultimate step in the biosynthesis of riboflavin. The polypeptide is 6,7-dimethyl-8-ribityllumazine synthase (ribH) (Mycobacterium tuberculosis (strain CDC 1551 / Oshkosh)).